Consider the following 756-residue polypeptide: Protein O-mannosyl-transferase 2 (756 aa).

The next 7 membrane-spanning stretches (helical) occupy residues 64–84, 110–130, 156–176, 179–199, 203–223, 245–265, and 293–313; these read AHVPVFILALVIVLSVSTRFY, TFFFDVHPPLGKMLIGLAGYL, AFCAALGSCLPPFAFLVVLEL, SSTAALIAASLLIFDTGCITL, ILLDPILMFFIMGSVLCMVKF, CLSGSLGVKFVGLFVILLVGI, and VFGLIMLPLFLYTTIFAIHFI. MIR domains are found at residues 344–400, 410–466, and 471–528; these read PEYL…VKRL, PELV…VEVC, and GDPV…IEDH. The next 4 membrane-spanning stretches (helical) occupy residues 602–622, 643–663, 672–692, and 713–733; these read PVIWWLNLLSLALFVILLTVA, LMEGGGMLFLGWLLHYLPFYI, HYFPAMMFSSMLTGITLDILL, and SVLLLGFIYSFYLFHPLSYGM.

The protein belongs to the glycosyltransferase 39 family. As to expression, widely expressed. Has particularly strong expression in ovary, testis, liver, brain, muscle, heart and eye.

The protein resides in the endoplasmic reticulum membrane. It carries out the reaction a di-trans,poly-cis-dolichyl beta-D-mannosyl phosphate + L-seryl-[protein] = 3-O-(alpha-D-mannosyl)-L-seryl-[protein] + a di-trans,poly-cis-dolichyl phosphate + H(+). The enzyme catalyses a di-trans,poly-cis-dolichyl beta-D-mannosyl phosphate + L-threonyl-[protein] = 3-O-(alpha-D-mannosyl)-L-threonyl-[protein] + a di-trans,poly-cis-dolichyl phosphate + H(+). It participates in protein modification; protein glycosylation. In terms of biological role, transfers mannosyl residues to the hydroxyl group of serine or threonine residues. Coexpression of both POMT1 and POMT2 is necessary for enzyme activity, expression of either POMT1 or POMT2 alone is insufficient. This Danio rerio (Zebrafish) protein is Protein O-mannosyl-transferase 2.